Consider the following 133-residue polypeptide: Histone H2A.1 (133 aa).

The segment at 1-23 (MSTTGKGGKAKGKTASSKQVSRS) is disordered. The residue at position 2 (S2) is an N-acetylserine. N6-acetyllysine occurs at positions 6, 9, 11, 13, and 18. S123 carries the post-translational modification Phosphoserine. A Glycyl lysine isopeptide (Lys-Gly) (interchain with G-Cter in ubiquitin) cross-link involves residue K124.

Belongs to the histone H2A family. In terms of assembly, the nucleosome is a histone octamer containing two molecules each of H2A, H2B, H3 and H4 assembled in one H3-H4 heterotetramer and two H2A-H2B heterodimers. The octamer wraps approximately 147 bp of DNA. Post-translationally, monoubiquitination of Lys-124 gives a specific tag for epigenetic transcriptional repression. Acetylation occurs almost exclusively in the MAC.

Its subcellular location is the nucleus. It localises to the chromosome. Functionally, core component of nucleosome. Nucleosomes wrap and compact DNA into chromatin, limiting DNA accessibility to the cellular machineries which require DNA as a template. Histones thereby play a central role in transcription regulation, DNA repair, DNA replication and chromosomal stability. DNA accessibility is regulated via a complex set of post-translational modifications of histones, also called histone code, and nucleosome remodeling. The sequence is that of Histone H2A.1 (HTA2) from Tetrahymena thermophila (strain SB210).